Here is a 196-residue protein sequence, read N- to C-terminus: 7-methyl-GTP pyrophosphatase (196 aa).

Aspartate 72 serves as the catalytic Proton acceptor.

The protein belongs to the Maf family. YceF subfamily. The cofactor is a divalent metal cation.

It is found in the cytoplasm. It carries out the reaction N(7)-methyl-GTP + H2O = N(7)-methyl-GMP + diphosphate + H(+). In terms of biological role, nucleoside triphosphate pyrophosphatase that hydrolyzes 7-methyl-GTP (m(7)GTP). May have a dual role in cell division arrest and in preventing the incorporation of modified nucleotides into cellular nucleic acids. The polypeptide is 7-methyl-GTP pyrophosphatase (Neisseria meningitidis serogroup B (strain ATCC BAA-335 / MC58)).